We begin with the raw amino-acid sequence, 1889 residues long: Treslin (1889 aa).

Phosphoserine is present on residues Ser295, Ser599, Ser820, Ser861, Ser919, Ser934, Ser1002, Ser1027, and Ser1078. A compositionally biased stretch (low complexity) spans 812–832; that stretch reads DSMSQESMSPPPSSSTHRSVS. A disordered region spans residues 812 to 836; that stretch reads DSMSQESMSPPPSSSTHRSVSAITE. The disordered stretch occupies residues 979 to 1063; it reads RLLHRQIKGR…RENFPVQSIQ (85 aa). Residues 1020 to 1050 are compositionally biased toward polar residues; it reads LSFSRTNSGSFYSVSQPKSRSVQRIHSSQQE. Disordered regions lie at residues 1098 to 1421, 1471 to 1508, 1520 to 1543, 1630 to 1714, 1730 to 1751, and 1841 to 1875; these read EIST…SQFS, LPGE…SSSE, GKQR…SPQT, SCTP…SLEQ, VCQL…ETSW, and QGRT…TLSR. Polar residues predominate over residues 1127–1179; that stretch reads TAQTLLYTPERLQNSPTEMTSAEGTISEATIKTPSSHGYNSPFASKVTSQKTV. Phosphothreonine is present on Thr1134. Ser1141 is subject to Phosphoserine. Residues 1187-1197 show a composition bias toward low complexity; that stretch reads SPPLTKLPSTP. Residues 1203 to 1219 show a composition bias toward polar residues; it reads QPPQCSSDCTWPHSVNS. Residues 1339–1351 show a composition bias toward low complexity; sequence TSPSVTSSVSCPV. A compositionally biased stretch (basic residues) spans 1373-1382; the sequence is KLRRSCRKKS. Ser1406 carries the post-translational modification Phosphoserine. The span at 1496–1508 shows a compositional bias: low complexity; the sequence is LVPAPSSVSSSSE. 2 stretches are compositionally biased toward polar residues: residues 1525 to 1543 and 1652 to 1662; these read DAAQ…SPQT and WTPSPKQSGKT. The span at 1705–1714 shows a compositional bias: basic and acidic residues; that stretch reads PEGKERSLEQ.

The protein belongs to the treslin family. As to quaternary structure, interacts with TOPBP1 (via BRCT domains); interaction takes place in a CDK2-dependent manner. Component of the replisome complex composed of at least DONSON, MCM2, MCM7, PCNA and TICRR.

It localises to the nucleus. In terms of biological role, regulator of DNA replication and S/M and G2/M checkpoints. Regulates the triggering of DNA replication initiation via its interaction with TOPBP1 by participating in CDK2-mediated loading of CDC45L onto replication origins. Required for the transition from pre-replication complex (pre-RC) to pre-initiation complex (pre-IC). Required to prevent mitotic entry after treatment with ionizing radiation. This Mus musculus (Mouse) protein is Treslin (Ticrr).